A 154-amino-acid chain; its full sequence is MKTYTAKPAEIEKKWILIDAEGVVLGRLASIVAMRLRGKHKPTFTPHMDMGDNVIIINADKVQMTGDKRDAKKYYWHTGHPGGIKHRTARQVLEGAHPERVVIKAVERMISRNKLGKQQMTNLRVYAGAEHPHEAQQPEVLDVKSMNAKNTRSA.

The interval 132–154 (PHEAQQPEVLDVKSMNAKNTRSA) is disordered.

Belongs to the universal ribosomal protein uL13 family. Part of the 50S ribosomal subunit.

In terms of biological role, this protein is one of the early assembly proteins of the 50S ribosomal subunit, although it is not seen to bind rRNA by itself. It is important during the early stages of 50S assembly. In Paracoccus denitrificans (strain Pd 1222), this protein is Large ribosomal subunit protein uL13.